The sequence spans 439 residues: tRNA modification GTPase MnmE (439 aa).

R20, E78, and K116 together coordinate (6S)-5-formyl-5,6,7,8-tetrahydrofolate. The TrmE-type G domain maps to 211 to 364 (GIYVAILGEP…LLSAIQKKVE (154 aa)). GTP-binding positions include 221–226 (NSGKST), 240–246 (SEYAGTT), and 265–268 (DTAG). Residues S225 and T246 each coordinate Mg(2+). K439 is a binding site for (6S)-5-formyl-5,6,7,8-tetrahydrofolate.

The protein belongs to the TRAFAC class TrmE-Era-EngA-EngB-Septin-like GTPase superfamily. TrmE GTPase family. As to quaternary structure, homodimer. Heterotetramer of two MnmE and two MnmG subunits. The cofactor is K(+).

It is found in the cytoplasm. Its function is as follows. Exhibits a very high intrinsic GTPase hydrolysis rate. Involved in the addition of a carboxymethylaminomethyl (cmnm) group at the wobble position (U34) of certain tRNAs, forming tRNA-cmnm(5)s(2)U34. This chain is tRNA modification GTPase MnmE, found in Ehrlichia ruminantium (strain Welgevonden).